The sequence spans 391 residues: Isochorismate synthase EntC (391 aa).

Mg(2+)-binding residues include Thr-140, Thr-142, Val-145, and Asp-146. Lys-147 serves as the catalytic Proton acceptor. The active-site Proton donor is Glu-197. The isochorismate site is built by Gly-214, Ser-215, Glu-241, Ala-303, Arg-347, and Gly-361. Position 241 (Glu-241) interacts with Mg(2+). Residue Glu-376 coordinates Mg(2+). Lys-380 lines the isochorismate pocket.

The protein belongs to the isochorismate synthase family. Monomer. Forms a specific pairwise interaction with EntB; this interaction likely facilitates substrate channeling to connect the EntB and EntC active sites. Mg(2+) is required as a cofactor.

It catalyses the reaction chorismate = isochorismate. Its pathway is siderophore biosynthesis; enterobactin biosynthesis. In terms of biological role, involved in the biosynthesis of the siderophore enterobactin (macrocyclic trimeric lactone of N-(2,3-dihydroxybenzoyl)-serine). Catalyzes the reversible conversion of chorismate to isochorismate. This chain is Isochorismate synthase EntC, found in Escherichia coli O157:H7.